A 72-amino-acid polypeptide reads, in one-letter code: Phaiodotoxin-3 (72 aa).

In terms of domain architecture, LCN-type CS-alpha/beta spans 1–72 (KFIRHKDESF…CFGALESKCA (72 aa)). Disulfide bonds link Cys13-Cys38, Cys23-Cys50, Cys27-Cys52, and Cys63-Cys71.

Belongs to the long (4 C-C) scorpion toxin superfamily. Sodium channel inhibitor family. As to expression, expressed by the venom gland.

The protein localises to the secreted. Its function is as follows. Sodium channel (Nav) specific neurotoxin. The sequence is that of Phaiodotoxin-3 from Anuroctonus phaiodactylus (Mafia scorpion).